The primary structure comprises 287 residues: Ethylene-responsive transcription factor ERF116 (287 aa).

The segment at residues 80 to 140 (YPVGVRPRPS…ASSGSAVSSS (61 aa)) is a DNA-binding region (AP2/ERF).

Belongs to the AP2/ERF transcription factor family. ERF subfamily.

It is found in the nucleus. Its function is as follows. Probably acts as a transcriptional activator. Binds to the GCC-box pathogenesis-related promoter element. May be involved in the regulation of gene expression by stress factors and by components of stress signal transduction pathways. The polypeptide is Ethylene-responsive transcription factor ERF116 (ERF116) (Arabidopsis thaliana (Mouse-ear cress)).